The following is a 222-amino-acid chain: Small ribosomal subunit protein uS3 (222 aa).

Residues 38–106 (IRKFISEKLA…NVHINIVEIK (69 aa)) enclose the KH type-2 domain.

This sequence belongs to the universal ribosomal protein uS3 family. In terms of assembly, part of the 30S ribosomal subunit. Forms a tight complex with proteins S10 and S14.

In terms of biological role, binds the lower part of the 30S subunit head. Binds mRNA in the 70S ribosome, positioning it for translation. The sequence is that of Small ribosomal subunit protein uS3 from Lactobacillus johnsonii (strain CNCM I-12250 / La1 / NCC 533).